The chain runs to 129 residues: MDPQKALSRTLLLLLFLHLSLLGCRSHPLGGPGSASELPGLQELLDRLRDRVSELQAEQLRVEPLQQGQGLEETWDSPAAAPAGFLGPHHSLLQALRGPKMMRDSGCFGRRLDRIGSLSGLGCNVLRRY.

An N-terminal signal peptide occupies residues 1 to 26 (MDPQKALSRTLLLLLFLHLSLLGCRS). Cysteine 107 and cysteine 123 are oxidised to a cystine.

Belongs to the natriuretic peptide family. Post-translationally, the precursor molecule is proteolytically cleaved, possibly by FURIN or CORIN, to produce the active peptide. May undergo further proteolytic cleavage by various proteases such as DPP4, MME and possibly FAP, to give rise to a variety of shorter peptides. May be cleaved at Pro-99 by the prolyl endopeptidase FAP (seprase) activity (in vitro). May be degraded by IDE. During IDE degradation, the resulting products initially increase the activation of NPR1 and can also stimulate NPR2 to produce cGMP before the fragments are completely degraded and inactivated by IDE (in vitro).

It is found in the secreted. In terms of biological role, cardiac hormone that plays a key role in mediating cardio-renal homeostasis. May also function as a paracrine antifibrotic factor in the heart. Acts by specifically binding and stimulating NPR1 to produce cGMP, which in turn activates effector proteins that drive various biological responses. Involved in regulating the extracellular fluid volume and maintaining the fluid-electrolyte balance through natriuresis, diuresis, vasorelaxation, and inhibition of renin and aldosterone secretion. Binds the clearance receptor NPR3. In Ovis aries (Sheep), this protein is Natriuretic peptides B (NPPB).